A 459-amino-acid chain; its full sequence is Sperm microtubule associated protein 2-like (459 aa).

Residues 1–138 (MEEGDFSGSS…QEDGKDDLFP (138 aa)) form a disordered region. Low complexity predominate over residues 21-30 (TTTTTETRTT). A compositionally biased stretch (acidic residues) spans 47 to 63 (NGDEAEAVGEEGQEEDY). A compositionally biased stretch (basic and acidic residues) spans 64 to 73 (EGSKTHKSHE). The span at 77–87 (SFRSHNSSDPP) shows a compositional bias: polar residues. 2 stretches are compositionally biased toward basic and acidic residues: residues 91 to 112 (KASDSLRSRKGIEPLEPRKTSD) and 127 to 136 (ERQEDGKDDL). THEG repeat units follow at residues 172–190 (KKCFYSRKRVQDLSKPKKQ), 212–231 (AALKAKLSKRIEDLAQPRLV), 258–277 (PALVTRPSKRIQKLAKPNKF), 291–310 (TTRYSDPSPRILRLSIAKGT), 327–346 (STLSAVATPRIVDLAHPRIK), 367–386 (AALLANPSKRTIFLAKSKRV), 403–422 (AATHSQVSERVQELANPHTR), and 440–459 (SALKAHCSDRVKELAEPIVR).

The polypeptide is Sperm microtubule associated protein 2-like (Mus musculus (Mouse)).